We begin with the raw amino-acid sequence, 229 residues long: Urease accessory protein UreF (229 aa).

This sequence belongs to the UreF family. As to quaternary structure, ureD, UreF and UreG form a complex that acts as a GTP-hydrolysis-dependent molecular chaperone, activating the urease apoprotein by helping to assemble the nickel containing metallocenter of UreC. The UreE protein probably delivers the nickel.

It is found in the cytoplasm. Required for maturation of urease via the functional incorporation of the urease nickel metallocenter. This Methylobacterium radiotolerans (strain ATCC 27329 / DSM 1819 / JCM 2831 / NBRC 15690 / NCIMB 10815 / 0-1) protein is Urease accessory protein UreF.